A 97-amino-acid chain; its full sequence is Defensin-like protein 301 (97 aa).

The N-terminal stretch at 1–24 (MEKVTSIFFVLLLISSCLILRSQG) is a signal peptide. 6 disulfide bridges follow: cysteine 28-cysteine 47, cysteine 34-cysteine 53, cysteine 39-cysteine 55, cysteine 65-cysteine 84, cysteine 71-cysteine 92, and cysteine 76-cysteine 94.

It belongs to the DEFL family.

It localises to the secreted. The chain is Defensin-like protein 301 from Arabidopsis thaliana (Mouse-ear cress).